A 282-amino-acid chain; its full sequence is MAITAAQVKELRDRTGAGMMDCKKALTETNGDIELAIDNMRKSGAAKAAKKAGNIAAEGAILIKNGEGFAALLEVNCQTDFVAKDANFLAFANSVLDVASAAKVSIEDLKAQFEETRVALVAKIGENINVRRVEYIDGANLAQYRHGERIGVVVAGEADEETLKHVAMHVAASKPEFVNPEDVPADLVEKEKALQIEIAMNEGKPAEIAEKMVIGRMKKFTGEISLTGQAYIMEPKKTVGAVLKEKGASVSNFIRLEVGEGIAKKEEDFAAEVAAQIAATKG.

Residues 79–82 are involved in Mg(2+) ion dislocation from EF-Tu; the sequence is TDFV.

The protein belongs to the EF-Ts family.

Its subcellular location is the cytoplasm. In terms of biological role, associates with the EF-Tu.GDP complex and induces the exchange of GDP to GTP. It remains bound to the aminoacyl-tRNA.EF-Tu.GTP complex up to the GTP hydrolysis stage on the ribosome. The chain is Elongation factor Ts from Shewanella piezotolerans (strain WP3 / JCM 13877).